A 284-amino-acid chain; its full sequence is Riboflavin transporter (284 aa).

EamA domains lie at 2-129 and 141-273; these read VAAC…LIII and LLPI…SLYL. 8 consecutive transmembrane segments (helical) span residues 26-46, 58-78, 82-102, 115-135, 136-156, 167-187, 195-215, and 247-267; these read SVII…PLLV, FGLH…WIYA, VPIW…ILCA, LLTT…WSDS, YTVY…YSVM, ASIS…LWLA, ITAP…FTAL, and GWIV…ALII.

The protein belongs to the drug/metabolite transporter (DMT) superfamily. 10 TMS drug/metabolite exporter (DME) (TC 2.A.7.3) family.

It localises to the cell membrane. Its function is as follows. Transports riboflavin into the cell. In Brucella anthropi (strain ATCC 49188 / DSM 6882 / CCUG 24695 / JCM 21032 / LMG 3331 / NBRC 15819 / NCTC 12168 / Alc 37) (Ochrobactrum anthropi), this protein is Riboflavin transporter.